The chain runs to 301 residues: Diaminopimelate epimerase (301 aa).

The substrate site is built by Asn-15, Gln-47, and Asn-67. Residue Cys-76 is the Proton donor of the active site. Substrate contacts are provided by residues 77 to 78 (GN), Asn-163, Asn-197, and 215 to 216 (ER). Cys-224 acts as the Proton acceptor in catalysis. 225 to 226 (GS) contributes to the substrate binding site.

The protein belongs to the diaminopimelate epimerase family. Homodimer.

Its subcellular location is the cytoplasm. The enzyme catalyses (2S,6S)-2,6-diaminopimelate = meso-2,6-diaminopimelate. Its pathway is amino-acid biosynthesis; L-lysine biosynthesis via DAP pathway; DL-2,6-diaminopimelate from LL-2,6-diaminopimelate: step 1/1. Its function is as follows. Catalyzes the stereoinversion of LL-2,6-diaminopimelate (L,L-DAP) to meso-diaminopimelate (meso-DAP), a precursor of L-lysine and an essential component of the bacterial peptidoglycan. This Rhizobium rhizogenes (strain K84 / ATCC BAA-868) (Agrobacterium radiobacter) protein is Diaminopimelate epimerase.